An 81-amino-acid chain; its full sequence is ATP synthase subunit c, chloroplastic (81 aa).

The next 2 membrane-spanning stretches (helical) occupy residues 7 to 27 (AASV…PGIG) and 57 to 77 (LAFM…LLFA).

This sequence belongs to the ATPase C chain family. As to quaternary structure, F-type ATPases have 2 components, F(1) - the catalytic core - and F(0) - the membrane proton channel. F(1) has five subunits: alpha(3), beta(3), gamma(1), delta(1), epsilon(1). F(0) has four main subunits: a(1), b(1), b'(1) and c(10-14). The alpha and beta chains form an alternating ring which encloses part of the gamma chain. F(1) is attached to F(0) by a central stalk formed by the gamma and epsilon chains, while a peripheral stalk is formed by the delta, b and b' chains.

It is found in the plastid. The protein resides in the chloroplast thylakoid membrane. Functionally, f(1)F(0) ATP synthase produces ATP from ADP in the presence of a proton or sodium gradient. F-type ATPases consist of two structural domains, F(1) containing the extramembraneous catalytic core and F(0) containing the membrane proton channel, linked together by a central stalk and a peripheral stalk. During catalysis, ATP synthesis in the catalytic domain of F(1) is coupled via a rotary mechanism of the central stalk subunits to proton translocation. Its function is as follows. Key component of the F(0) channel; it plays a direct role in translocation across the membrane. A homomeric c-ring of between 10-14 subunits forms the central stalk rotor element with the F(1) delta and epsilon subunits. In Cryptomeria japonica (Japanese cedar), this protein is ATP synthase subunit c, chloroplastic.